The following is a 329-amino-acid chain: Two pore potassium channel protein sup-9 (329 aa).

At 1–8 the chain is on the cytoplasmic side; that stretch reads MKRQNIRT. Residues 9–29 traverse the membrane as a helical segment; sequence LSLIVCTLTYLLVGAAVFDAL. N53 carries N-linked (GlcNAc...) asparagine glycosylation. The segment at residues 80-100 is an intramembrane region (pore-forming); the sequence is FSGAFYFATTVITTIGYGHST. The Selectivity filter motif lies at 93–98; the sequence is TIGYGH. The helical transmembrane segment at 108-128 threads the bilayer; the sequence is VFCMLYALAGIPLGLIMFQSI. Over 129-157 the chain is Cytoplasmic; it reads GERMNTFAAKLLRFIRRAAGKQPIVTSSD. Residues 158-178 traverse the membrane as a helical segment; it reads LIIFCTGWGGLLIFGGAFMFS. N182 carries an N-linked (GlcNAc...) asparagine glycan. Positions 186-206 form an intramembrane region, pore-forming; the sequence is FDAVYYCFVTLTTIGFGDYVA. A Selectivity filter motif is present at residues 198–203; sequence TIGFGD. The chain crosses the membrane as a helical span at residues 220–240; the sequence is VFFSLVFILFGLTVISAAMNL. At 241 to 329 the chain is on the cytoplasmic side; the sequence is LVLRFLTMNT…FSGMTTRPKY (89 aa). Residues 289–296 are may be important for regulation by and/or interaction with sup-10; it reads SLASCSCY. The segment at 307–329 is disordered; the sequence is HRKHTEPHGGPPTFSGMTTRPKY.

The protein belongs to the two pore domain potassium channel (TC 1.A.1.8) family. In terms of assembly, may form a complex with the regulatory subunits unc-93 and sup-10. In terms of tissue distribution, low levels along surface of body-wall muscle cells, in vulval and intestinal muscles and, more weakly, in anal depressor and sphincter muscles. Also expressed in a subset of head neurons.

The protein localises to the membrane. Functionally, potassium channel involved in coordination of muscle contraction. Activity is regulated by sup-18. The sequence is that of Two pore potassium channel protein sup-9 from Caenorhabditis elegans.